A 124-amino-acid chain; its full sequence is Large ribosomal subunit protein bL12 (124 aa).

It belongs to the bacterial ribosomal protein bL12 family. In terms of assembly, homodimer. Part of the ribosomal stalk of the 50S ribosomal subunit. Forms a multimeric L10(L12)X complex, where L10 forms an elongated spine to which 2 to 4 L12 dimers bind in a sequential fashion. Binds GTP-bound translation factors.

Forms part of the ribosomal stalk which helps the ribosome interact with GTP-bound translation factors. Is thus essential for accurate translation. The protein is Large ribosomal subunit protein bL12 of Campylobacter fetus subsp. fetus (strain 82-40).